A 252-amino-acid chain; its full sequence is 2-succinyl-6-hydroxy-2,4-cyclohexadiene-1-carboxylate synthase (252 aa).

Belongs to the AB hydrolase superfamily. MenH family. Monomer.

It carries out the reaction 5-enolpyruvoyl-6-hydroxy-2-succinyl-cyclohex-3-ene-1-carboxylate = (1R,6R)-6-hydroxy-2-succinyl-cyclohexa-2,4-diene-1-carboxylate + pyruvate. The protein operates within quinol/quinone metabolism; 1,4-dihydroxy-2-naphthoate biosynthesis; 1,4-dihydroxy-2-naphthoate from chorismate: step 3/7. Its pathway is quinol/quinone metabolism; menaquinone biosynthesis. Its function is as follows. Catalyzes a proton abstraction reaction that results in 2,5-elimination of pyruvate from 2-succinyl-5-enolpyruvyl-6-hydroxy-3-cyclohexene-1-carboxylate (SEPHCHC) and the formation of 2-succinyl-6-hydroxy-2,4-cyclohexadiene-1-carboxylate (SHCHC). The polypeptide is 2-succinyl-6-hydroxy-2,4-cyclohexadiene-1-carboxylate synthase (Escherichia coli (strain SMS-3-5 / SECEC)).